Here is a 315-residue protein sequence, read N- to C-terminus: Methionyl-tRNA formyltransferase (315 aa).

Ser113 to Pro116 lines the (6S)-5,6,7,8-tetrahydrofolate pocket.

This sequence belongs to the Fmt family.

It catalyses the reaction L-methionyl-tRNA(fMet) + (6R)-10-formyltetrahydrofolate = N-formyl-L-methionyl-tRNA(fMet) + (6S)-5,6,7,8-tetrahydrofolate + H(+). Attaches a formyl group to the free amino group of methionyl-tRNA(fMet). The formyl group appears to play a dual role in the initiator identity of N-formylmethionyl-tRNA by promoting its recognition by IF2 and preventing the misappropriation of this tRNA by the elongation apparatus. This is Methionyl-tRNA formyltransferase from Shigella boydii serotype 18 (strain CDC 3083-94 / BS512).